The primary structure comprises 596 residues: CRISPR-associated DNA-binding protein Cas12m (596 aa).

The segment at 19–53 is recognition domain (REC1-N); it reads EVLRQQLWLAHNLREDLVSLQLAYDDDLKAIWSSY. Residues 54 to 121 form a recognition domain (REC2) region; it reads PDVAQAEDTM…RDAIAVVKDD (68 aa). Coiled coils occupy residues 55–83 and 91–117; these read DVAQ…ARIE and TELT…AIAV. The tract at residues 122–190 is recognition domain (REC1-C); that stretch reads AAERRKARSD…LRHHRFDGSG (69 aa). Residues 191 to 302 are wedge domain (WED); it reads TIAVQLQRQA…RAKLCVTARI (112 aa). The segment at 303–313 is linker; sequence GDTEPVTSGPT. Residues 314 to 541 are ruvC-I; the sequence is VALHLGWRST…RDGVPVTIVA (228 aa). His-317 contacts Mg(2+). The interval 541–577 is target nucleic-acid binding (TNB); it reads AAADFTRTHSRCGHVNPADDRYLSNPVRCDGCGAMYD. Zn(2+) contacts are provided by His-549, Cys-552, Cys-569, and Cys-572. Residues 578–596 are ruvC-II; sequence QDRSFVTLMLRAATAPSNP. Residue Asp-579 coordinates Mg(2+).

It belongs to the CRISPR-associated DNA-binding protein Cas12m family. Binds crRNA and target dsDNA as a monomer. Mg(2+) serves as cofactor. Zn(2+) is required as a cofactor.

Functionally, CRISPR (clustered regularly interspaced short palindromic repeat), is an adaptive immune system that provides protection against mobile genetic elements (viruses, transposable elements and conjugative plasmids). CRISPR clusters contain sequences complementary to antecedent mobile elements and target invading nucleic acids. CRISPR clusters are transcribed and processed into CRISPR RNA (crRNA). Recognizes a short motif in the CRISPR repeat sequences (the 5' PAM or protospacer adjacent motif, 5'-TTN-3' in this organism) to help distinguish self versus nonself, as targets within the bacterial CRISPR locus do not have PAMs. Upon expression in E.coli as a CRISPR locus inhibits plasmid propagation when targeted to regions essential for plasmid propagation (replication origin and dnaA). The crRNA-Cas12m complex inhibits transcription from target DNA leading to gene silencing. Cas12m-crRNA binds DNA in a PAM-dependent, crRNA-guided fashion. Binds a 17-bp crRNA-ss-target DNA heteroduplex, in a 56 nucleotide crRNA. No dsDNA, ssDNA or RNA nuclease activity is seen for the crRNA-Cas12m complex. Is required to process pre-crRNA to mature crRNA without a tracrRNA. Upon expression in E.coli as a CRISPR region preferentially binds to its associated crRNA. This Mycolicibacterium mucogenicum (Mycobacterium mucogenicum) protein is CRISPR-associated DNA-binding protein Cas12m.